A 266-amino-acid chain; its full sequence is GTP cyclohydrolase III (266 aa).

The protein belongs to the archaeal-type GTP cyclohydrolase family.

The catalysed reaction is GTP + 3 H2O = 2-amino-5-formylamino-6-(5-phospho-D-ribosylamino)pyrimidin-4(3H)-one + 2 phosphate + 2 H(+). In terms of biological role, catalyzes the formation of 2-amino-5-formylamino-6-ribofuranosylamino-4(3H)-pyrimidinone ribonucleotide monophosphate and inorganic phosphate from GTP. Also has an independent pyrophosphate phosphohydrolase activity. The chain is GTP cyclohydrolase III from Methanococcus maripaludis (strain C5 / ATCC BAA-1333).